Here is a 1368-residue protein sequence, read N- to C-terminus: DNA-directed RNA polymerase subunit beta (1368 aa).

It belongs to the RNA polymerase beta chain family. The RNAP catalytic core consists of 2 alpha, 1 beta, 1 beta' and 1 omega subunit. When a sigma factor is associated with the core the holoenzyme is formed, which can initiate transcription.

It carries out the reaction RNA(n) + a ribonucleoside 5'-triphosphate = RNA(n+1) + diphosphate. Its function is as follows. DNA-dependent RNA polymerase catalyzes the transcription of DNA into RNA using the four ribonucleoside triphosphates as substrates. In Burkholderia ambifaria (strain MC40-6), this protein is DNA-directed RNA polymerase subunit beta.